A 63-amino-acid chain; its full sequence is MNFNKIFVFVALILAISLGNTEAGWLRKLGKKIERIGQHTRDASIQVLGIAQQAANVAATARG.

The signal sequence occupies residues 1–22 (MNFNKIFVFVALILAISLGNTE). R62 is modified (arginine amide).

It belongs to the cecropin family.

It localises to the secreted. Cecropins have lytic and antibacterial activity against several Gram-positive and Gram-negative bacteria. The protein is Cecropin-B (CecB) of Drosophila simulans (Fruit fly).